We begin with the raw amino-acid sequence, 209 residues long: Protein ASG7 (209 aa).

Residues 1–49 are Lumenal-facing; that stretch reads MTTLASSIEHKTKHLAAPFENDENPWMKKYCCQCKSCKMSVPVQPWLPR. Residues 50–70 form a helical membrane-spanning segment; it reads FFVFGILCPVFWLVNLLAWWF. Residues 71-184 are Cytoplasmic-facing; it reads LQYWQPHELE…LLRKTFRDWN (114 aa). Ser121, Ser123, and Ser125 each carry phosphoserine. Thr153 carries the phosphothreonine modification. A helical transmembrane segment spans residues 185–205; it reads LRSLLGLLIDSILIIFVVLLC. Over 206–209 the chain is Lumenal; the sequence is KKSR.

The protein resides in the endomembrane system. Required for receptor inhibition of inappropriately expressed a-factor receptor (STE3) in MAT a cells. Inhibits signaling by relocalizing the G protein beta-gamma (STE4-STE18) subunit to intracellular membranes. May also be a mechanism for the down-regulation of the mating pheromone response after the zygotic fusion event, promoting the transition of the new diploid cell to vegetative growth. The protein is Protein ASG7 (ASG7) of Saccharomyces cerevisiae (strain ATCC 204508 / S288c) (Baker's yeast).